Reading from the N-terminus, the 691-residue chain is Pre-mRNA-splicing factor CLF1 (691 aa).

HAT repeat units follow at residues 52-84 (EYQG…WELE), 86-118 (KEYA…AELK), 120-152 (RNIN…VEEM), 154-185 (GNIP…LEQR), 187-218 (GEYD…FEEE), 220-258 (GTSD…YEAK), 260-294 (HDLD…FEKQ), 304-336 (VVLS…LEEA), 338-372 (GDID…LWIF), 382-418 (KNPE…FEIR), 420-451 (GDLA…MEQK), 453-485 (YEFG…LERG), 487-521 (DDLD…FEEE), 523-554 (GEYD…FEIN), 574-612 (EAKA…FEKT), and 617-650 (EDIE…YIFP).

It belongs to the crooked-neck family. As to quaternary structure, associated with the spliceosome.

Its subcellular location is the nucleus. Its function is as follows. Involved in pre-mRNA splicing and cell cycle progression. Required for the spliceosome assembly and initiation of the DNA replication. The polypeptide is Pre-mRNA-splicing factor CLF1 (CLF1) (Pyricularia oryzae (strain 70-15 / ATCC MYA-4617 / FGSC 8958) (Rice blast fungus)).